The chain runs to 391 residues: Putative ABC transporter glucose-binding protein TsgA13 (391 aa).

A signal peptide spans 1–28; that stretch reads MLDEESSIQRRDVLSALGAAGVTTLAGC. The interval 24–71 is disordered; it reads TLAGCTGGDTGDTDDTEASETTASEGTTSGTTTGDVETTDGGGPSEGE. A compositionally biased stretch (low complexity) spans 42-59; it reads SETTASEGTTSGTTTGDV.

The protein belongs to the BMP lipoprotein family. As to quaternary structure, the complex is composed of two ATP-binding proteins (TsgD13), two transmembrane proteins (TsgB13 and TsgC13) and a solute-binding protein (TsgA13).

In terms of biological role, part of an ABC transporter complex involved in glucose import. The sequence is that of Putative ABC transporter glucose-binding protein TsgA13 (tsgA13) from Haloferax volcanii (strain ATCC 29605 / DSM 3757 / JCM 8879 / NBRC 14742 / NCIMB 2012 / VKM B-1768 / DS2) (Halobacterium volcanii).